The primary structure comprises 922 residues: Pertactin autotransporter (922 aa).

A signal peptide spans 1-34 (MNMSLSRIVKAAPLRRTTLAMALGALGAAPAAYA). Positions 260–262 (RGD) match the Cell attachment site; involved in adhesion to various eukaryotic cell lines motif. Tandem repeats lie at residues 266–270 (GGAVP), 271–275 (GGAVP), and 276–280 (GGAVP). Positions 266–290 (GGAVPGGAVPGGAVPGGFGPLLDGW) are 4 X 5 AA tandem repeats of G-G-A-V-P. A 4; approximate repeat occupies 281-285 (GGFGP). The tract at residues 561 to 619 (SLVGAKAPPAPKPAPQPGPQPGPQPPQPPQPPQPPQPPQPPQRQPEAPAPQPPAGRELS) is disordered. Positions 568–613 (PPAPKPAPQPGPQPGPQPPQPPQPPQPPQPPQPPQRQPEAPAPQPP) are enriched in pro residues. Positions 575–603 (PQPGPQPGPQPPQPPQPPQPPQPPQPPQR) are 9 X 3 AA approximate repeats of P-Q-P. The Autotransporter domain maps to 654–922 (LNPDAGGAWG…TFHAGYRYSW (269 aa)).

As to quaternary structure, monomer.

Its subcellular location is the periplasm. It is found in the secreted. The protein resides in the cell surface. It localises to the cell outer membrane. In terms of biological role, agglutinogen that binds to eukaryotic cells; a process mediated by the R-G-D sequence. Pertactin may have a role in bacterial adhesion, and thus play a role in virulence. May contribute to the disease state of whooping cough. In Bordetella parapertussis (strain 12822 / ATCC BAA-587 / NCTC 13253), this protein is Pertactin autotransporter (prn).